A 198-amino-acid polypeptide reads, in one-letter code: MESNNNNLNLDMEKDQETTFDYSKRAQWLRAAVLGANDGLVSTASLMMGIGAVKQDVRIMLLTGFAGLVAGACSMAIGEFISVYSQYDIEVAQMKRESGGETKKEKLPSPTQAAIASALAFTLGAIVPLLAAAFVKEYKVRIGVIVAAVTLALVMFGWLGAVLGKAPVVKSLVRVLIGGWLAMAITFGFTKLVGSHGL.

Residues 1-32 (MESNNNNLNLDMEKDQETTFDYSKRAQWLRAA) lie on the Cytoplasmic side of the membrane. The chain crosses the membrane as a helical span at residues 33–53 (VLGANDGLVSTASLMMGIGAV). Residues 54–60 (KQDVRIM) are Vacuolar-facing. The helical transmembrane segment at 61–81 (LLTGFAGLVAGACSMAIGEFI) threads the bilayer. Residues 82–114 (SVYSQYDIEVAQMKRESGGETKKEKLPSPTQAA) are Cytoplasmic-facing. The helical transmembrane segment at 115 to 135 (IASALAFTLGAIVPLLAAAFV) threads the bilayer. The Vacuolar portion of the chain corresponds to 136–141 (KEYKVR). The chain crosses the membrane as a helical span at residues 142 to 162 (IGVIVAAVTLALVMFGWLGAV). Residues 163–174 (LGKAPVVKSLVR) lie on the Cytoplasmic side of the membrane. The helical transmembrane segment at 175–195 (VLIGGWLAMAITFGFTKLVGS) threads the bilayer. At 196 to 198 (HGL) the chain is on the vacuolar side.

This sequence belongs to the CCC1 family.

The protein localises to the vacuole membrane. The catalysed reaction is Fe(2+)(in) = Fe(2+)(out). Its function is as follows. Probable vacuolar iron transporter that may be involved in the regulation of iron distribution throughout the plant. The sequence is that of Vacuolar iron transporter homolog 4 from Arabidopsis thaliana (Mouse-ear cress).